Reading from the N-terminus, the 366-residue chain is MLKKGPAVIGATCLTSALLLSGCGLFQSDKAAEEIDPPQDVTFVNDEAGANSNTTAAKKTESEKSDTAKADQASSTVMRELYLIDKNGYVVAQTLPLPKSESTAKQALEYLVQGGPVSEILPNGFRAVLPADTTVNVDIKKDGTAIADFSNEFKNYKKEDEQKIVQSVTWTLTQFSSIDKVKLRINGHELKEMPVGGTPISDDLSRKDGINLETAGVNDLTATHPLTVYYLAENEDSEYYVPVTKRIDNSEKDDITAAINELAKGPSKVSGLLTDFSEDVKLVSKPKIKDGRVTLDFNQSIFGSADEKTKMISSEVLNSIVLTLTEQPDVKSVSVKVNGKSELVNEKGEKLTEPVSRPSQVNTGSF.

2 disordered regions span residues 42–72 (TFVN…KADQ) and 346–366 (EKGE…TGSF). The span at 58–69 (KKTESEKSDTAK) shows a compositional bias: basic and acidic residues. Positions 357–366 (RPSQVNTGSF) are enriched in polar residues.

In terms of biological role, unknown. Affects both sporulation and germination. The sequence is that of Spore germination protein GerM (gerM) from Bacillus subtilis (strain 168).